A 62-amino-acid chain; its full sequence is Alpha-conotoxin-like Bn1.3 (62 aa).

Positions 1–18 are cleaved as a signal peptide; the sequence is MGMRMMFTVFLLVVLATA. Positions 19–48 are excised as a propeptide; it reads VLPVTLDRASDGRNAAANAKTPRLIAPFIR. 2 disulfides stabilise this stretch: Cys51–Cys57 and Cys52–Cys61. The residue at position 61 (Cys61) is a Cysteine amide.

The protein belongs to the conotoxin A superfamily. Expressed by the venom duct.

The protein resides in the secreted. Its function is as follows. Does not show activity on the acetylcholine receptors tested. The chain is Alpha-conotoxin-like Bn1.3 from Conus bandanus (Banded marble cone).